The chain runs to 221 residues: Pyridoxine/pyridoxamine 5'-phosphate oxidase (221 aa).

Substrate contacts are provided by residues 14-17 and Lys73; that span reads RNEY. FMN contacts are provided by residues 68 to 73, 83 to 84, Lys90, and Gln112; these read RTVLLK and FT. Substrate contacts are provided by Tyr130, Arg134, and Ser138. Residues 147-148 and Trp193 contribute to the FMN site; that span reads QS. 199 to 201 contacts substrate; it reads RLH. Arg203 contributes to the FMN binding site.

This sequence belongs to the pyridoxamine 5'-phosphate oxidase family. As to quaternary structure, homodimer. FMN serves as cofactor.

The enzyme catalyses pyridoxamine 5'-phosphate + O2 + H2O = pyridoxal 5'-phosphate + H2O2 + NH4(+). It catalyses the reaction pyridoxine 5'-phosphate + O2 = pyridoxal 5'-phosphate + H2O2. Its pathway is cofactor metabolism; pyridoxal 5'-phosphate salvage; pyridoxal 5'-phosphate from pyridoxamine 5'-phosphate: step 1/1. It participates in cofactor metabolism; pyridoxal 5'-phosphate salvage; pyridoxal 5'-phosphate from pyridoxine 5'-phosphate: step 1/1. Catalyzes the oxidation of either pyridoxine 5'-phosphate (PNP) or pyridoxamine 5'-phosphate (PMP) into pyridoxal 5'-phosphate (PLP). The chain is Pyridoxine/pyridoxamine 5'-phosphate oxidase from Salinispora arenicola (strain CNS-205).